The primary structure comprises 215 residues: RWD domain-containing protein C1393.09c (215 aa).

Residues 7-114 (EEREILESIY…SVAKEETNAI (108 aa)) enclose the RWD domain.

Its subcellular location is the cytoplasm. It is found in the nucleus. The sequence is that of RWD domain-containing protein C1393.09c from Schizosaccharomyces pombe (strain 972 / ATCC 24843) (Fission yeast).